Here is a 980-residue protein sequence, read N- to C-terminus: Valine--tRNA ligase (980 aa).

The 'HIGH' region signature appears at 43–53 (PNVTGTLHMGH). The 'KMSKS' region motif lies at 586–590 (KMSKS). An ATP-binding site is contributed by lysine 589. Positions 914–980 (LVDMDAERMR…AGLREQRGKL (67 aa)) form a coiled coil.

It belongs to the class-I aminoacyl-tRNA synthetase family. ValS type 1 subfamily. In terms of assembly, monomer.

It localises to the cytoplasm. The catalysed reaction is tRNA(Val) + L-valine + ATP = L-valyl-tRNA(Val) + AMP + diphosphate. Functionally, catalyzes the attachment of valine to tRNA(Val). As ValRS can inadvertently accommodate and process structurally similar amino acids such as threonine, to avoid such errors, it has a 'posttransfer' editing activity that hydrolyzes mischarged Thr-tRNA(Val) in a tRNA-dependent manner. The sequence is that of Valine--tRNA ligase from Xanthomonas oryzae pv. oryzae (strain PXO99A).